Consider the following 209-residue polypeptide: uncharacterized protein (209 aa).

In terms of biological role, may influence the expression of the nuc gene. This is an uncharacterized protein from Shigella flexneri.